Reading from the N-terminus, the 460-residue chain is UDP-N-acetylmuramoylalanine--D-glutamate ligase (460 aa).

117 to 123 (GTNGKTT) is an ATP binding site.

The protein belongs to the MurCDEF family.

It localises to the cytoplasm. It catalyses the reaction UDP-N-acetyl-alpha-D-muramoyl-L-alanine + D-glutamate + ATP = UDP-N-acetyl-alpha-D-muramoyl-L-alanyl-D-glutamate + ADP + phosphate + H(+). Its pathway is cell wall biogenesis; peptidoglycan biosynthesis. Its function is as follows. Cell wall formation. Catalyzes the addition of glutamate to the nucleotide precursor UDP-N-acetylmuramoyl-L-alanine (UMA). In Prochlorococcus marinus (strain MIT 9313), this protein is UDP-N-acetylmuramoylalanine--D-glutamate ligase.